The sequence spans 177 residues: Dual-action ribosomal maturation protein DarP (177 aa).

The protein belongs to the DarP family.

It localises to the cytoplasm. Its function is as follows. Member of a network of 50S ribosomal subunit biogenesis factors which assembles along the 30S-50S interface, preventing incorrect 23S rRNA structures from forming. Promotes peptidyl transferase center (PTC) maturation. In Histophilus somni (strain 2336) (Haemophilus somnus), this protein is Dual-action ribosomal maturation protein DarP.